The chain runs to 376 residues: Beta-centractin (376 aa).

Residue M1 is modified to N-acetylmethionine. Y4 bears the 3'-nitrotyrosine mark.

It belongs to the actin family. ARP1 subfamily.

The protein localises to the cytoplasm. It localises to the cytoskeleton. The protein resides in the microtubule organizing center. Its subcellular location is the centrosome. Its function is as follows. Component of a multi-subunit complex involved in microtubule based vesicle motility. It is associated with the centrosome. This chain is Beta-centractin (Actr1b), found in Mus musculus (Mouse).